Reading from the N-terminus, the 306-residue chain is Pantothenate kinase (306 aa).

Gly-91 to Ser-98 is a binding site for ATP.

This sequence belongs to the prokaryotic pantothenate kinase family.

The protein resides in the cytoplasm. The enzyme catalyses (R)-pantothenate + ATP = (R)-4'-phosphopantothenate + ADP + H(+). The protein operates within cofactor biosynthesis; coenzyme A biosynthesis; CoA from (R)-pantothenate: step 1/5. The polypeptide is Pantothenate kinase (coaA) (Streptococcus pyogenes serotype M18 (strain MGAS8232)).